The following is a 452-amino-acid chain: Keratin, type II cytoskeletal 80 (452 aa).

Residues Met1 to Gln82 are head. At Ser45 the chain carries Phosphoserine. Residues Gln82–Leu118 form a coil 1A region. The IF rod domain maps to Glu83 to Met394. Residues Gln119–Phe135 form a linker 1 region. The interval Gln136–Leu227 is coil 1B. Residues Thr228–Ile251 are linker 12. The segment at Val252–Glu390 is coil 2. The segment at Glu391–Glu452 is tail. 2 stretches are compositionally biased toward polar residues: residues Thr411–Thr421 and Tyr443–Glu452. The segment at Thr411–Glu452 is disordered.

Belongs to the intermediate filament family. As to quaternary structure, heterotetramer of two type I and two type II keratins.

In Rattus norvegicus (Rat), this protein is Keratin, type II cytoskeletal 80 (Krt80).